Here is a 211-residue protein sequence, read N- to C-terminus: Dual specificity phosphatase 29 (211 aa).

The Tyrosine-protein phosphatase domain occupies 47–192 (HVNEVWPGIY…LRTLDIQLAI (146 aa)). A substrate-binding site is contributed by 136 to 143 (HCAMGRSR). Cys-137 functions as the Phosphocysteine intermediate in the catalytic mechanism.

The protein belongs to the protein-tyrosine phosphatase family. Non-receptor class dual specificity subfamily.

The protein resides in the cytoplasm. Its subcellular location is the nucleus. The catalysed reaction is O-phospho-L-tyrosyl-[protein] + H2O = L-tyrosyl-[protein] + phosphate. It carries out the reaction O-phospho-L-seryl-[protein] + H2O = L-seryl-[protein] + phosphate. The enzyme catalyses O-phospho-L-threonyl-[protein] + H2O = L-threonyl-[protein] + phosphate. In terms of biological role, dual specificity phosphatase able to dephosphorylate phosphotyrosine, phosphoserine and phosphothreonine residues within the same substrate, with a preference for phosphotyrosine as a substrate. Involved in the modulation of AMPK and MAPK1/2 signaling pathways. The polypeptide is Dual specificity phosphatase 29 (dusp29) (Callorhinchus milii (Ghost shark)).